An 85-amino-acid chain; its full sequence is Small ribosomal subunit protein eS21 (85 aa).

This sequence belongs to the eukaryotic ribosomal protein eS21 family. As to quaternary structure, component of the 40S small ribosomal subunit.

The protein localises to the cytoplasm. It is found in the cytosol. Its subcellular location is the rough endoplasmic reticulum. This is Small ribosomal subunit protein eS21 (rps-21) from Pectinaria gouldii (Trumpet worm).